The sequence spans 191 residues: Molybdenum cofactor guanylyltransferase (191 aa).

Residues 13 to 15 (LAG), Lys-26, Asp-72, and Asp-102 contribute to the GTP site. Asp-102 lines the Mg(2+) pocket.

It belongs to the MobA family. In terms of assembly, monomer. It depends on Mg(2+) as a cofactor.

The protein resides in the cytoplasm. The enzyme catalyses Mo-molybdopterin + GTP + H(+) = Mo-molybdopterin guanine dinucleotide + diphosphate. Transfers a GMP moiety from GTP to Mo-molybdopterin (Mo-MPT) cofactor (Moco or molybdenum cofactor) to form Mo-molybdopterin guanine dinucleotide (Mo-MGD) cofactor. The chain is Molybdenum cofactor guanylyltransferase from Pseudomonas entomophila (strain L48).